The sequence spans 109 residues: Protein AC78 (109 aa).

A helical transmembrane segment spans residues 61 to 81 (GIIILISVVAFIALFLLLYVI).

The protein localises to the host membrane. Its subcellular location is the virion. Functionally, plays an essential role in budded virus production and occlusion body formation. This chain is Protein AC78 (AC78), found in Autographa californica nuclear polyhedrosis virus (AcMNPV).